The following is a 785-amino-acid chain: Probably inactive leucine-rich repeat receptor-like protein kinase At5g58150 (785 aa).

An N-terminal signal peptide occupies residues 1–21 (MRLSLWGSLLFFSFFVKHLTS). Residues 22-436 (LDPNTDAYHL…KVNKKNTGLK (415 aa)) lie on the Extracellular side of the membrane. LRR repeat units follow at residues 64 to 88 (SENVLHISASGLDLSGSIPDNTIGK), 89 to 112 (MSKLQTLDLSGNKITSLPSDLWSL), 114 to 136 (LLESLNLSSNRISEPLPSNIGNF), 138 to 160 (SLHTLDLSFNSISGKIPAAISNL), 161 to 184 (VNLTTLKLHNNDFQFGVPPELVHC), 186 to 208 (SLLSIDLSSNRLNESLPVGFGSA), 210 to 232 (PLLKSLNLSRNLFQGSLIGVLHE), 236 to 258 (TVDLSENRFDGHILQLIPGHKHN), 259 to 283 (WSSLIHLDLSDNSFVGHIFNGLSSA), 284 to 306 (HKLGHLNLACNRFRAQEFPEIGK), 307 to 330 (LSALHYLNLSRTNLTNIIPREISR), 331 to 355 (LSHLKVLDLSSNNLTGHVPMLSVKN), 357 to 377 (EVLDLSLNKLDGDIPRPLLEK), and 379 to 405 (AMMQRFNFSFNNLTFCNPNFSQETIQR). Asparagine 119 carries an N-linked (GlcNAc...) asparagine glycan. N-linked (GlcNAc...) asparagine glycans are attached at residues asparagine 162, asparagine 198, asparagine 216, and asparagine 258. N-linked (GlcNAc...) asparagine glycosylation is found at asparagine 314, asparagine 319, and asparagine 343. N-linked (GlcNAc...) asparagine glycans are attached at residues asparagine 385, asparagine 390, and asparagine 397. A helical membrane pass occupies residues 437–457 (IGLGLAISMAFLLIGLLLILV). Topologically, residues 458 to 785 (ALRVRRKSRT…GLLKDISPNY (328 aa)) are cytoplasmic. Residues threonine 510 and threonine 518 each carry the phosphothreonine modification. Positions 521–785 (FDRGTMLWEG…GLLKDISPNY (265 aa)) constitute a Protein kinase domain. ATP is bound by residues 527 to 535 (LWEGKSGPT) and lysine 549. Phosphotyrosine is present on residues tyrosine 594 and tyrosine 683.

Belongs to the protein kinase superfamily. Ser/Thr protein kinase family.

It localises to the cell membrane. This chain is Probably inactive leucine-rich repeat receptor-like protein kinase At5g58150, found in Arabidopsis thaliana (Mouse-ear cress).